Consider the following 398-residue polypeptide: Phosphoglycerate kinase (398 aa).

Substrate is bound by residues 21–23 (DFN), R36, 59–62 (HLGR), R119, and R157. ATP contacts are provided by residues K208, G296, E327, and 354–357 (GGDS).

It belongs to the phosphoglycerate kinase family. In terms of assembly, monomer.

It is found in the cytoplasm. The catalysed reaction is (2R)-3-phosphoglycerate + ATP = (2R)-3-phospho-glyceroyl phosphate + ADP. It functions in the pathway carbohydrate degradation; glycolysis; pyruvate from D-glyceraldehyde 3-phosphate: step 2/5. The chain is Phosphoglycerate kinase (pgk) from Lactococcus lactis subsp. lactis (strain IL1403) (Streptococcus lactis).